The sequence spans 167 residues: UTP pyrophosphatase (167 aa).

It catalyses the reaction UTP + H2O = UMP + diphosphate + H(+). Specifically catalyzes the hydrolysis of UTP to UMP and diphosphate in vitro, albeit at apparently slow rate. Shows no activity towards ATP, GTP, CTP, dTTP and ITP as substrates. This is UTP pyrophosphatase from Escherichia coli (strain K12).